Consider the following 81-residue polypeptide: Conotoxin ViKr92 (81 aa).

Residues 1–22 (MKLTWMMIVAVLFLTAWTFVTA) form the signal peptide. Positions 23–51 (DDTRYKLENPFLKARNELQKLEASQLNER) are excised as a propeptide. 3 cysteine pairs are disulfide-bonded: C53/C70, C60/C74, and C69/C78.

The protein belongs to the conotoxin O1 superfamily. As to expression, expressed by the venom duct.

It localises to the secreted. The sequence is that of Conotoxin ViKr92 from Conus virgo (Virgin cone).